A 244-amino-acid chain; its full sequence is uncharacterized protein (244 aa).

Basic and acidic residues-rich tracts occupy residues 1-10 and 100-127; these read MNDPFARMET and GTRGDPAREEVAGAEDLPHAGGEDHGEE. Disordered regions lie at residues 1-79, 100-130, and 219-244; these read MNDP…GEEL, GTRGDPAREEVAGAEDLPHAGGEDHGEEPNY, and TGASRVHAAGRRVSPSPGTWLEEIKL.

This is an uncharacterized protein from Homo sapiens (Human).